A 98-amino-acid chain; its full sequence is HIG1 domain family member 1B (98 aa).

At 1 to 28 (MSANKGWWVPPEGEDNLSKKFLRKTRES) the chain is on the cytoplasmic side. The HIG1 domain maps to 1 to 94 (MSANKGWWVP…YRDYIKRVSE (94 aa)). Residues 29 to 46 (PLVPIGVAGCLVIAAYRI) form a helical membrane-spanning segment. Topologically, residues 47–60 (YRLKARGSTKLSIH) are extracellular. The helical transmembrane segment at 61 to 83 (LIHTRVAAQACAVGAIMLGAMYT) threads the bilayer. Over 84-98 (MYRDYIKRVSEDAEK) the chain is Cytoplasmic.

The protein resides in the membrane. The sequence is that of HIG1 domain family member 1B (Higd1b) from Mus musculus (Mouse).